The chain runs to 320 residues: Nicotianamine synthase 3 (320 aa).

The protein belongs to the nicotianamine synthase (NAS)-like family. In terms of tissue distribution, in shoots.

The catalysed reaction is 3 S-adenosyl-L-methionine = nicotianamine + 3 S-methyl-5'-thioadenosine + 3 H(+). Synthesizes nicotianamine, a polyamine which serves as a sensor for the physiological iron status within the plant, and/or might be involved in the transport of iron. This is Nicotianamine synthase 3 (NAS3) from Arabidopsis thaliana (Mouse-ear cress).